A 286-amino-acid polypeptide reads, in one-letter code: Light-independent protochlorophyllide reductase iron-sulfur ATP-binding protein (286 aa).

ATP-binding positions include 10–15 (GIGKST) and Lys-39. A Mg(2+)-binding site is contributed by Ser-14. Residues Cys-95 and Cys-129 each contribute to the [4Fe-4S] cluster site. Position 180–181 (180–181 (NR)) interacts with ATP.

The protein belongs to the NifH/BchL/ChlL family. As to quaternary structure, homodimer. Protochlorophyllide reductase is composed of three subunits; ChlL, ChlN and ChlB. Requires [4Fe-4S] cluster as cofactor.

The catalysed reaction is chlorophyllide a + oxidized 2[4Fe-4S]-[ferredoxin] + 2 ADP + 2 phosphate = protochlorophyllide a + reduced 2[4Fe-4S]-[ferredoxin] + 2 ATP + 2 H2O. The protein operates within porphyrin-containing compound metabolism; chlorophyll biosynthesis (light-independent). In terms of biological role, component of the dark-operative protochlorophyllide reductase (DPOR) that uses Mg-ATP and reduced ferredoxin to reduce ring D of protochlorophyllide (Pchlide) to form chlorophyllide a (Chlide). This reaction is light-independent. The L component serves as a unique electron donor to the NB-component of the complex, and binds Mg-ATP. This is Light-independent protochlorophyllide reductase iron-sulfur ATP-binding protein from Leptolyngbya boryana (Plectonema boryanum).